Reading from the N-terminus, the 554-residue chain is Nuclear division defective protein 1 (554 aa).

Disordered regions lie at residues 1–31 (MDRDISYQQNYTSTGATATSSRQPSTDNNAD) and 98–117 (IQQQQQQQQQQQQQQQALGS). Positions 98–113 (IQQQQQQQQQQQQQQQ) are enriched in low complexity. Thr319 carries the phosphothreonine; by CDC28 modification. 2 disordered regions span residues 410–475 (PTPN…GKKP) and 493–554 (SSSS…FNSQ). The segment covering 411-427 (TPNCNSLHSTTTGTSAL) has biased composition (polar residues). Positions 448-465 (SSSNTVSFKSKSGNNNSK) are enriched in low complexity. A compositionally biased stretch (basic residues) spans 466–475 (GRIKKNGKKP). The span at 493–513 (SSSSLSSSLNASSSAGNSNSN) shows a compositional bias: low complexity. A compositionally biased stretch (basic residues) spans 515–524 (TKKRASKLKR). Residues 525–536 (SQSLLSDSGSKS) show a composition bias toward low complexity. Positions 539–554 (RKSCNSKSNGNLFNSQ) are enriched in polar residues.

As to quaternary structure, forms an activator complex with FKH2. In terms of processing, phosphorylation of Thr-319 by CDC28 is required for the interaction with FKH2 and recruitment to promoters.

The protein localises to the cytoplasm. It localises to the nucleus. Transcription activator involved in G2/M transcription through its association with FKH2. The protein is Nuclear division defective protein 1 (NDD1) of Saccharomyces cerevisiae (strain ATCC 204508 / S288c) (Baker's yeast).